The sequence spans 339 residues: Deubiquitinase and deneddylase Dub2 (339 aa).

The helical transmembrane segment at 36-56 (IIIALFLIVISCGLILCAYTF) threads the bilayer. Active-site residues include histidine 203, aspartate 220, and cysteine 282.

Belongs to the peptidase C48 family.

The protein localises to the secreted. Its subcellular location is the host cell. The protein resides in the membrane. Functionally, effector proteins function to alter host cell physiology and promote bacterial survival in host tissues. This protease possesses deubiquitinating and deneddylating activities. This Chlamydia trachomatis serovar B (strain Jali20/OT) protein is Deubiquitinase and deneddylase Dub2 (cdu2).